The following is a 436-amino-acid chain: GTPase Der (436 aa).

EngA-type G domains follow at residues 3–168 (PLIA…PESD) and 177–352 (IRLA…QNRS). GTP-binding positions include 9 to 16 (GRPNVGKS), 56 to 60 (DTGGY), 120 to 123 (NKAE), 183 to 190 (GRPNVGKS), 230 to 234 (DTAGL), and 295 to 298 (NKWD). Residues 353 to 436 (RKISTSALNR…VTISLRFMQK (84 aa)) enclose the KH-like domain.

This sequence belongs to the TRAFAC class TrmE-Era-EngA-EngB-Septin-like GTPase superfamily. EngA (Der) GTPase family. Associates with the 50S ribosomal subunit.

Its function is as follows. GTPase that plays an essential role in the late steps of ribosome biogenesis. In Chlorobium luteolum (strain DSM 273 / BCRC 81028 / 2530) (Pelodictyon luteolum), this protein is GTPase Der.